The sequence spans 154 residues: Nucleoside diphosphate kinase (154 aa).

6 residues coordinate ATP: Lys-12, Phe-60, Arg-88, Thr-94, Arg-105, and Asn-115. His-118 serves as the catalytic Pros-phosphohistidine intermediate.

Belongs to the NDK family. Requires Mg(2+) as cofactor.

The protein localises to the cytoplasm. The enzyme catalyses a 2'-deoxyribonucleoside 5'-diphosphate + ATP = a 2'-deoxyribonucleoside 5'-triphosphate + ADP. It catalyses the reaction a ribonucleoside 5'-diphosphate + ATP = a ribonucleoside 5'-triphosphate + ADP. Its function is as follows. Major role in the synthesis of nucleoside triphosphates other than ATP. The ATP gamma phosphate is transferred to the NDP beta phosphate via a ping-pong mechanism, using a phosphorylated active-site intermediate. This chain is Nucleoside diphosphate kinase, found in Haloarcula marismortui (strain ATCC 43049 / DSM 3752 / JCM 8966 / VKM B-1809) (Halobacterium marismortui).